Reading from the N-terminus, the 443-residue chain is UDP-N-acetylmuramate--L-alanine ligase (443 aa).

110–116 (GAHGKTS) lines the ATP pocket.

This sequence belongs to the MurCDEF family.

The protein resides in the cytoplasm. It catalyses the reaction UDP-N-acetyl-alpha-D-muramate + L-alanine + ATP = UDP-N-acetyl-alpha-D-muramoyl-L-alanine + ADP + phosphate + H(+). Its pathway is cell wall biogenesis; peptidoglycan biosynthesis. Its function is as follows. Cell wall formation. The sequence is that of UDP-N-acetylmuramate--L-alanine ligase from Streptococcus agalactiae serotype Ia (strain ATCC 27591 / A909 / CDC SS700).